The primary structure comprises 886 residues: DNA mismatch repair protein MutS (886 aa).

626 to 633 (GPNMGGKS) provides a ligand contact to ATP.

Belongs to the DNA mismatch repair MutS family.

Its function is as follows. This protein is involved in the repair of mismatches in DNA. It is possible that it carries out the mismatch recognition step. This protein has a weak ATPase activity. This Burkholderia ambifaria (strain ATCC BAA-244 / DSM 16087 / CCUG 44356 / LMG 19182 / AMMD) (Burkholderia cepacia (strain AMMD)) protein is DNA mismatch repair protein MutS.